The following is a 280-amino-acid chain: Acyl-[acyl-carrier-protein]--UDP-N-acetylglucosamine O-acyltransferase (280 aa).

This sequence belongs to the transferase hexapeptide repeat family. LpxA subfamily. As to quaternary structure, homotrimer.

Its subcellular location is the cytoplasm. The enzyme catalyses a (3R)-hydroxyacyl-[ACP] + UDP-N-acetyl-alpha-D-glucosamine = a UDP-3-O-[(3R)-3-hydroxyacyl]-N-acetyl-alpha-D-glucosamine + holo-[ACP]. The protein operates within glycolipid biosynthesis; lipid IV(A) biosynthesis; lipid IV(A) from (3R)-3-hydroxytetradecanoyl-[acyl-carrier-protein] and UDP-N-acetyl-alpha-D-glucosamine: step 1/6. Functionally, involved in the biosynthesis of lipid A, a phosphorylated glycolipid that anchors the lipopolysaccharide to the outer membrane of the cell. This chain is Acyl-[acyl-carrier-protein]--UDP-N-acetylglucosamine O-acyltransferase, found in Chlamydia trachomatis serovar L2 (strain ATCC VR-902B / DSM 19102 / 434/Bu).